The primary structure comprises 451 residues: Trigger factor (451 aa).

One can recognise a PPIase FKBP-type domain in the interval Asp170–Pro256.

This sequence belongs to the FKBP-type PPIase family. Tig subfamily.

It is found in the cytoplasm. The catalysed reaction is [protein]-peptidylproline (omega=180) = [protein]-peptidylproline (omega=0). Its function is as follows. Involved in protein export. Acts as a chaperone by maintaining the newly synthesized protein in an open conformation. Functions as a peptidyl-prolyl cis-trans isomerase. The polypeptide is Trigger factor (Treponema denticola (strain ATCC 35405 / DSM 14222 / CIP 103919 / JCM 8153 / KCTC 15104)).